The following is a 307-amino-acid chain: Fructokinase (307 aa).

Belongs to the carbohydrate kinase PfkB family.

The catalysed reaction is D-fructose + ATP = D-fructose 6-phosphate + ADP + H(+). This Vibrio alginolyticus protein is Fructokinase (scrK).